Consider the following 700-residue polypeptide: Polyribonucleotide nucleotidyltransferase (700 aa).

Residues aspartate 484 and aspartate 490 each contribute to the Mg(2+) site. The KH domain occupies 551-610 (PRVIRMVVDPEKIREIIGPGGKTISKIIAETGVKIDIEEDGRLYITASDLRSGERAKQMI). The S1 motif domain occupies 620 to 688 (GEIYLGKVLR…KLGRISLSRK (69 aa)).

Belongs to the polyribonucleotide nucleotidyltransferase family. Requires Mg(2+) as cofactor.

It localises to the cytoplasm. The catalysed reaction is RNA(n+1) + phosphate = RNA(n) + a ribonucleoside 5'-diphosphate. Its function is as follows. Involved in mRNA degradation. Catalyzes the phosphorolysis of single-stranded polyribonucleotides processively in the 3'- to 5'-direction. The sequence is that of Polyribonucleotide nucleotidyltransferase from Thermoanaerobacter pseudethanolicus (strain ATCC 33223 / 39E) (Clostridium thermohydrosulfuricum).